The primary structure comprises 139 residues: Protein archease (139 aa).

Ca(2+) contacts are provided by Asp12, Asp138, and Ile139.

The protein belongs to the archease family.

In terms of biological role, activates the tRNA-splicing ligase complex by facilitating the enzymatic turnover of catalytic subunit RtcB. Acts by promoting the guanylylation of RtcB, a key intermediate step in tRNA ligation. Can also alter the NTP specificity of RtcB such that ATP, dGTP or ITP is used efficiently. The chain is Protein archease from Saccharolobus solfataricus (strain ATCC 35092 / DSM 1617 / JCM 11322 / P2) (Sulfolobus solfataricus).